Here is a 244-residue protein sequence, read N- to C-terminus: Ribosomal RNA small subunit methyltransferase G (244 aa).

S-adenosyl-L-methionine is bound by residues G79, F84, A130–E131, and R150. A disordered region spans residues K221–M244.

Belongs to the methyltransferase superfamily. RNA methyltransferase RsmG family.

The protein resides in the cytoplasm. Specifically methylates the N7 position of a guanine in 16S rRNA. This chain is Ribosomal RNA small subunit methyltransferase G, found in Lactiplantibacillus plantarum (strain ATCC BAA-793 / NCIMB 8826 / WCFS1) (Lactobacillus plantarum).